We begin with the raw amino-acid sequence, 72 residues long: Rubredoxin (72 aa).

Positions 19-72 (DAVLECKICWQRYDPAEGDPVWQIPPGTPFAALPAHWRCPRCDGDREQFMVVDG) constitute a Rubredoxin-like domain. The Fe cation site is built by C24, C27, C57, and C60.

Belongs to the rubredoxin family. The cofactor is Fe(3+).

Rubredoxin is a small nonheme, iron protein lacking acid-labile sulfide. Its single Fe, chelated to 4 Cys, functions as an electron acceptor and may also stabilize the conformation of the molecule. Could be involved in hydrogenase-linked redox processes. This is Rubredoxin (hoxR) from Azotobacter vinelandii.